Here is a 378-residue protein sequence, read N- to C-terminus: Dual-specificity RNA methyltransferase RlmN (378 aa).

The active-site Proton acceptor is the glutamate 95. Positions 101-345 constitute a Radical SAM core domain; it reads EETRGTLCVS…TTIRKTRGDD (245 aa). Cysteine 108 and cysteine 350 are oxidised to a cystine. 3 residues coordinate [4Fe-4S] cluster: cysteine 115, cysteine 119, and cysteine 122. S-adenosyl-L-methionine-binding positions include 176–177, serine 208, 230–232, and asparagine 307; these read GE and SLH. Cysteine 350 serves as the catalytic S-methylcysteine intermediate.

It belongs to the radical SAM superfamily. RlmN family. The cofactor is [4Fe-4S] cluster.

Its subcellular location is the cytoplasm. It catalyses the reaction adenosine(2503) in 23S rRNA + 2 reduced [2Fe-2S]-[ferredoxin] + 2 S-adenosyl-L-methionine = 2-methyladenosine(2503) in 23S rRNA + 5'-deoxyadenosine + L-methionine + 2 oxidized [2Fe-2S]-[ferredoxin] + S-adenosyl-L-homocysteine. It carries out the reaction adenosine(37) in tRNA + 2 reduced [2Fe-2S]-[ferredoxin] + 2 S-adenosyl-L-methionine = 2-methyladenosine(37) in tRNA + 5'-deoxyadenosine + L-methionine + 2 oxidized [2Fe-2S]-[ferredoxin] + S-adenosyl-L-homocysteine. Functionally, specifically methylates position 2 of adenine 2503 in 23S rRNA and position 2 of adenine 37 in tRNAs. m2A2503 modification seems to play a crucial role in the proofreading step occurring at the peptidyl transferase center and thus would serve to optimize ribosomal fidelity. This is Dual-specificity RNA methyltransferase RlmN from Burkholderia thailandensis (strain ATCC 700388 / DSM 13276 / CCUG 48851 / CIP 106301 / E264).